The chain runs to 111 residues: Phosphoribosyl-AMP cyclohydrolase (111 aa).

A Mg(2+)-binding site is contributed by D80. C81 provides a ligand contact to Zn(2+). Mg(2+) is bound by residues D82 and D84. 2 residues coordinate Zn(2+): C97 and C104.

The protein belongs to the PRA-CH family. As to quaternary structure, homodimer. Requires Mg(2+) as cofactor. Zn(2+) is required as a cofactor.

Its subcellular location is the cytoplasm. The catalysed reaction is 1-(5-phospho-beta-D-ribosyl)-5'-AMP + H2O = 1-(5-phospho-beta-D-ribosyl)-5-[(5-phospho-beta-D-ribosylamino)methylideneamino]imidazole-4-carboxamide. It functions in the pathway amino-acid biosynthesis; L-histidine biosynthesis; L-histidine from 5-phospho-alpha-D-ribose 1-diphosphate: step 3/9. Its function is as follows. Catalyzes the hydrolysis of the adenine ring of phosphoribosyl-AMP. This chain is Phosphoribosyl-AMP cyclohydrolase, found in Mycobacterium ulcerans (strain Agy99).